The primary structure comprises 101 residues: Urease subunit beta (101 aa).

Belongs to the urease beta subunit family. Heterotrimer of UreA (gamma), UreB (beta) and UreC (alpha) subunits. Three heterotrimers associate to form the active enzyme.

Its subcellular location is the cytoplasm. The catalysed reaction is urea + 2 H2O + H(+) = hydrogencarbonate + 2 NH4(+). Its pathway is nitrogen metabolism; urea degradation; CO(2) and NH(3) from urea (urease route): step 1/1. The polypeptide is Urease subunit beta (Burkholderia ambifaria (strain ATCC BAA-244 / DSM 16087 / CCUG 44356 / LMG 19182 / AMMD) (Burkholderia cepacia (strain AMMD))).